The chain runs to 382 residues: Alcohol dehydrogenase 4 (382 aa).

It belongs to the iron-containing alcohol dehydrogenase family. As to quaternary structure, homodimer. It depends on Zn(2+) as a cofactor. Fe(2+) is required as a cofactor.

It is found in the mitochondrion. The catalysed reaction is a primary alcohol + NAD(+) = an aldehyde + NADH + H(+). It catalyses the reaction a secondary alcohol + NAD(+) = a ketone + NADH + H(+). Its activity is regulated as follows. Inhibited by EDTA. Reduces acetaldehyde to ethanol during glucose fermentation. Specific for ethanol. Shows drastically reduced activity towards primary alcohols from 4 carbon atoms upward. Isomers of aliphatic alcohol, as well as secondary alcohols and glycerol are not used at all. The sequence is that of Alcohol dehydrogenase 4 (ADH4) from Saccharomyces cerevisiae (strain YJM789) (Baker's yeast).